Reading from the N-terminus, the 437-residue chain is ATP-dependent protease ATPase subunit HslU (437 aa).

Residues Val-18, 60 to 65 (GVGKTE), Asp-249, Glu-315, and Arg-387 each bind ATP.

This sequence belongs to the ClpX chaperone family. HslU subfamily. A double ring-shaped homohexamer of HslV is capped on each side by a ring-shaped HslU homohexamer. The assembly of the HslU/HslV complex is dependent on binding of ATP.

The protein resides in the cytoplasm. Functionally, ATPase subunit of a proteasome-like degradation complex; this subunit has chaperone activity. The binding of ATP and its subsequent hydrolysis by HslU are essential for unfolding of protein substrates subsequently hydrolyzed by HslV. HslU recognizes the N-terminal part of its protein substrates and unfolds these before they are guided to HslV for hydrolysis. The sequence is that of ATP-dependent protease ATPase subunit HslU from Rhodospirillum centenum (strain ATCC 51521 / SW).